Here is a 443-residue protein sequence, read N- to C-terminus: POU domain, class 3, transcription factor 3-B (443 aa).

Disordered regions lie at residues isoleucine 21–valine 40, serine 100–tryptophan 150, and asparagine 182–aspartate 244. Residues proline 101 to asparagine 121 show a composition bias toward polar residues. Residues serine 210 to alanine 225 show a composition bias toward basic residues. Positions glutamate 238–aspartate 312 constitute a POU-specific domain. Serine 317 is modified (phosphoserine). The segment at residues lysine 330–threonine 389 is a DNA-binding region (homeobox).

This sequence belongs to the POU transcription factor family. Class-3 subfamily. As to expression, predominantly expressed in the central nervous system.

The protein resides in the nucleus. Functionally, transcription factor that may play important roles in patterning the embryonic brain. This is POU domain, class 3, transcription factor 3-B (pou3f3b) from Danio rerio (Zebrafish).